The sequence spans 574 residues: Putative dehydratase IlvD1 (574 aa).

The [4Fe-4S] cluster site is built by Cys124 and Cys197.

This sequence belongs to the IlvD/Edd family. [4Fe-4S] cluster serves as cofactor.

In terms of biological role, involved in the degradation of galactose via the DeLey-Doudoroff pathway. The sequence is that of Putative dehydratase IlvD1 (ilvD1) from Rhizobium meliloti (strain 1021) (Ensifer meliloti).